The sequence spans 131 residues: UPF0102 protein YraN (131 aa).

The segment covering Met-1–Thr-19 has biased composition (polar residues). Residues Met-1–Gly-20 are disordered.

Belongs to the UPF0102 family.

This Escherichia coli O157:H7 protein is UPF0102 protein YraN.